The sequence spans 248 residues: Cyclin-Q (248 aa).

Methionine 1 bears the N-acetylmethionine mark. Over residues 1-12 (MEAPEGGGGGPA) the composition is skewed to gly residues. The tract at residues 1–21 (MEAPEGGGGGPAARGPEGQPA) is disordered.

The protein belongs to the cyclin family. Cyclin-like FAM58 subfamily. Associates with CDK10 to promote its kinase activity. Interacts with SALL1.

Functionally, activating cyclin for the cyclin-associated kinase CDK10. This is Cyclin-Q from Homo sapiens (Human).